The chain runs to 392 residues: UPF0229 protein CPE1333 (392 aa).

Residues 75 to 100 (VTTGTGEERRGDRISSDKRKAISNNK) are disordered. Basic and acidic residues predominate over residues 80–94 (GEERRGDRISSDKRK).

Belongs to the UPF0229 family.

The chain is UPF0229 protein CPE1333 from Clostridium perfringens (strain 13 / Type A).